Reading from the N-terminus, the 1883-residue chain is AF4/FMR2 family member lilli (1883 aa).

Residues 1–45 (MAQQQQQQHLQQQQQQHHQQQQLQQLQQQQQLPQYNNNLYNLNYN) show a composition bias toward low complexity. 17 disordered regions span residues 1 to 88 (MAQQ…SEGD), 140 to 311 (INST…EKDI), 329 to 381 (SIAA…SCTT), 449 to 540 (MPTP…HHQH), 609 to 654 (LGGG…HLSR), 796 to 827 (SISSGSASGSSSSDSAAGEVVPLPGPGETLQI), 844 to 901 (MQQK…KKHA), 922 to 962 (TAAA…LAKG), 992 to 1018 (VAGSRKREHSSNSSSNGNTPTKKLHAA), 1039 to 1075 (TAAAGSSSDEDSTSSSCSSTKSSNSSSSGSDSEATAT), 1115 to 1145 (KNNRLYGAGSSSNSSSSETEEQQQQQQQHKQ), 1170 to 1238 (QHQQ…KSDK), 1358 to 1413 (YAAE…GART), 1450 to 1510 (EHGV…DQVS), 1543 to 1583 (ANGS…KATT), 1595 to 1641 (QTST…PPSD), and 1783 to 1803 (PSNSVGSQGSGSNTPPGRIVP). Residues 57 to 80 (REKYERQQGIQSDDRETSLFEAPR) are compositionally biased toward basic and acidic residues. Low complexity-rich tracts occupy residues 140–154 (INSTTTTSSSASLLP), 161–178 (QQQQQQQQQQQQHYQQQQ), 223–253 (SASSSSSASNNNSSSATNNATAAAATSASTA), and 362–381 (PLNSPPAASGASSSSLSCTT). A compositionally biased stretch (pro residues) spans 450-462 (PTPPKASPTPPTA). The residue at position 458 (Thr-458) is a Phosphothreonine. The span at 466–479 (LKSEKNHSLEKQDS) shows a compositional bias: basic and acidic residues. The segment covering 481-491 (LENDLELSESD) has biased composition (acidic residues). Phosphoserine occurs at positions 488 and 490. A compositionally biased stretch (low complexity) spans 500-540 (SAGNSSNSSETDSSESGSEASSKGEAQQQQQQQQQLLHHQH). Residues 609 to 625 (LGGGGGSGSTGGGGGSS) are compositionally biased toward gly residues. Low complexity-rich tracts occupy residues 626 to 639 (SSGMGNMSSSSSSN) and 796 to 813 (SISSGSASGSSSSDSAAG). Basic residues predominate over residues 867–877 (PRQKKPRKKKM). Phosphoserine occurs at positions 887 and 888. The segment at residues 930–942 (KKGRGRPRKQQQQ) is a DNA-binding region (a.T hook). The segment covering 939-962 (QQQQLQQTQSGNLSSASAGSLAKG) has biased composition (low complexity). Ser-953 and Ser-955 each carry phosphoserine. Low complexity-rich tracts occupy residues 1124–1145 (SSSNSSSSETEEQQQQQQQHKQ), 1170–1186 (QHQQQQPLQPQQQQQQQ), 1200–1222 (SSSSDGSSSSSTDSSSTNSSSSS), 1362–1376 (QQQQQQQHLHTQQLH), and 1385–1399 (HYQQQHQPHQQKAQQ). Over residues 1450-1467 (EHGVKPEPELDAGYEAKY) the composition is skewed to basic and acidic residues. Ser-1546 bears the Phosphoserine mark. Thr-1548 is modified (phosphothreonine). Composition is skewed to low complexity over residues 1558-1583 (QQQQHQQQQQQQQHQPQHQQQLKATT) and 1595-1606 (QTSTTATQQPTT). Residues 1614–1625 (TPPPVAPPPPPR) show a composition bias toward pro residues. Residues 1783–1794 (PSNSVGSQGSGS) are compositionally biased toward low complexity.

This sequence belongs to the AF4 family.

It localises to the nucleus. In terms of biological role, has a role in transcriptional regulation. Acts in parallel with the Ras/MAPK and the PI3K/PKB pathways in the control of cell identity and cellular growth. Essential for regulation of the cytoskeleton and cell growth but not for cell proliferation or growth rate. Required specifically for the microtubule-based basal transport of lipid droplets. Plays a partially redundant function downstream of Raf in cell fate specification in the developing eye. Pair-rule protein that regulates embryonic cellularization, gastrulation and segmentation. This Drosophila grimshawi (Hawaiian fruit fly) protein is AF4/FMR2 family member lilli.